The following is a 432-amino-acid chain: Glutamate-1-semialdehyde 2,1-aminomutase (432 aa).

Lys-265 carries the N6-(pyridoxal phosphate)lysine modification.

The protein belongs to the class-III pyridoxal-phosphate-dependent aminotransferase family. HemL subfamily. As to quaternary structure, homodimer. The cofactor is pyridoxal 5'-phosphate.

The protein resides in the cytoplasm. It carries out the reaction (S)-4-amino-5-oxopentanoate = 5-aminolevulinate. It participates in porphyrin-containing compound metabolism; protoporphyrin-IX biosynthesis; 5-aminolevulinate from L-glutamyl-tRNA(Glu): step 2/2. The sequence is that of Glutamate-1-semialdehyde 2,1-aminomutase from Photobacterium profundum (strain SS9).